We begin with the raw amino-acid sequence, 160 residues long: Phosphopantetheine adenylyltransferase (160 aa).

Residue serine 11 participates in substrate binding. Residues 11–12 (SF) and histidine 19 each bind ATP. Lysine 43, leucine 75, and arginine 89 together coordinate substrate. ATP contacts are provided by residues 90–92 (GLR), glutamate 100, and 125–131 (YSFISSS).

The protein belongs to the bacterial CoaD family. As to quaternary structure, homohexamer. Mg(2+) is required as a cofactor.

It is found in the cytoplasm. It carries out the reaction (R)-4'-phosphopantetheine + ATP + H(+) = 3'-dephospho-CoA + diphosphate. It functions in the pathway cofactor biosynthesis; coenzyme A biosynthesis; CoA from (R)-pantothenate: step 4/5. Reversibly transfers an adenylyl group from ATP to 4'-phosphopantetheine, yielding dephospho-CoA (dPCoA) and pyrophosphate. In Staphylococcus aureus (strain Mu3 / ATCC 700698), this protein is Phosphopantetheine adenylyltransferase.